We begin with the raw amino-acid sequence, 222 residues long: Ribosomal RNA small subunit methyltransferase G (222 aa).

Residues G73, L78, 124-125 (AE), and R137 contribute to the S-adenosyl-L-methionine site.

It belongs to the methyltransferase superfamily. RNA methyltransferase RsmG family.

It is found in the cytoplasm. In terms of biological role, specifically methylates the N7 position of guanine in position 518 of 16S rRNA. This chain is Ribosomal RNA small subunit methyltransferase G, found in Acidothermus cellulolyticus (strain ATCC 43068 / DSM 8971 / 11B).